The primary structure comprises 432 residues: Polypyrimidine tract-binding protein homolog 3 (432 aa).

RRM domains are found at residues 6–80 (KVVH…FSSH), 98–187 (NRIL…YNND), 245–319 (CTVL…FSKH), and 355–429 (KMIH…FSQL).

The protein resides in the nucleus. In terms of biological role, plays a role in pre-mRNA splicing. Binds to the polypyrimidine tract of introns. May promote the binding of U2 snRNP to pre-mRNA. The chain is Polypyrimidine tract-binding protein homolog 3 from Arabidopsis thaliana (Mouse-ear cress).